Consider the following 250-residue polypeptide: 2,5-dichloro-2,5-cyclohexadiene-1,4-diol dehydrogenase (250 aa).

9–34 is an NAD(+) binding site; the sequence is IIVTGGGSGIGRATVELLVASGANVA. Substrate is bound at residue Ser141. Catalysis depends on Tyr154, which acts as the Proton acceptor.

The protein belongs to the short-chain dehydrogenases/reductases (SDR) family.

The catalysed reaction is 2,5-dichlorocyclohexa-2,5-dien-1,4-diol + NAD(+) = 2,5-dichlorohydroquinone + NADH + H(+). The protein operates within xenobiotic degradation; gamma-hexachlorocyclohexane degradation. Catalyzes the dehydrogenation of 2,5-dichloro-2,5-cyclohexadiene-1,4-diol (2,5-DDOL) to 2,5-dichlorohydroquinone (2,5-DCHQ), a step in the degradation of gamma-hexachlorocyclohexane (gamma-HCH or lindane). This is 2,5-dichloro-2,5-cyclohexadiene-1,4-diol dehydrogenase from Sphingobium indicum (strain DSM 16412 / CCM 7286 / MTCC 6364 / B90A).